Reading from the N-terminus, the 213-residue chain is Probable GH family 25 lysozyme 4 (213 aa).

Residues 1–19 (MRLFLLLITFIALFGAINA) form the signal peptide. One can recognise a Ch-type lysozyme domain in the interval 21 to 213 (SGVDISQGSS…VGYDFNWYPN (193 aa)). Residues aspartate 24, aspartate 112, and glutamate 114 contribute to the active site.

Belongs to the glycosyl hydrolase 25 family.

Its subcellular location is the secreted. It catalyses the reaction Hydrolysis of (1-&gt;4)-beta-linkages between N-acetylmuramic acid and N-acetyl-D-glucosamine residues in a peptidoglycan and between N-acetyl-D-glucosamine residues in chitodextrins.. This chain is Probable GH family 25 lysozyme 4, found in Dictyostelium discoideum (Social amoeba).